A 613-amino-acid chain; its full sequence is Ribosome-associated molecular chaperone SSB2 (613 aa).

At A2 the chain carries N-acetylalanine. The segment at 2–391 (AEGVFQGAIG…ILTGQSTSDE (390 aa)) is nucleotide binding domain (NBD). 16-18 (TTY) provides a ligand contact to ATP. The residue at position 47 (T47) is a Phosphothreonine. Residues K73, 205-207 (GGT), 271-278 (ERAKRTLS), and G342 each bind ATP. An inter-domain linker region spans residues 392 to 402 (TKDLLLLDVAP). A substrate binding domain (SBD) region spans residues 403–613 (LSLGVGMQGD…RVVTKAMSSR (211 aa)). The Contributes to ribosome binding signature appears at 428–430 (KRR). T431 carries the post-translational modification Phosphothreonine. The tract at residues 516–612 (SEEIEKMVNQ…KRVVTKAMSS (97 aa)) is lid domain (SBDalpha). Residues 574-582 (IEAALSDAL) carry the Nuclear export signal motif. The interval 601–613 (GLKRVVTKAMSSR) is required for interaction with ribosomes.

The protein belongs to the heat shock protein 70 family. Ssb-type Hsp70 subfamily. Binds to ribosomes. Binds close to the ribosomal tunnel exit via contacts with both ribosomal proteins RPL35, RPL39 and RPL19, and rRNA. Directly interacts with nascent polypeptides. This interaction is dependent on the ribosome-associated complex (RAC). Interacts with SSE1.

It is found in the cytoplasm. It catalyses the reaction ATP + H2O = ADP + phosphate + H(+). In terms of biological role, ribosome-bound, Hsp70-type chaperone that assists in the cotranslational folding of newly synthesized proteins in the cytosol. Stimulates folding by interacting with nascent chains, binding to short, largely hydrophobic sequences exposed by unfolded proteins, thereby stabilizing longer, more slowly translated, and aggregation-prone nascent polypeptides and domains that cannot fold stably until fully synthesized. The Hsp70-protein substrate interaction depends on ATP-binding and on allosteric regulation between the NBD and the SBD. The ATP-bound state is characterized by a fast exchange rate of substrate (low affinity state), while in the ADP-bound state exchange is much slower (high affinity state). During the Hsp70 cycle, the chaperone switches between the ATP-bound state (open conformation) and the ADP-bound state (closed conformation) by major conformational rearrangements involving mainly the lid domain. Ssb cooperates with a specific Hsp40/Hsp70 co-chaperone termed the ribosome-associated complex (RAC), which stimulates the ATPase activity of the ribosome-associated pool of Ssbs and switches it to the high affinity substrate binding state. Hsp110 chaperone SSE1 and FES1 act as nucleotide exchange factors that cause substrate release. In Saccharomyces cerevisiae (strain ATCC 204508 / S288c) (Baker's yeast), this protein is Ribosome-associated molecular chaperone SSB2.